Consider the following 106-residue polypeptide: Iron-sulfur cluster assembly protein CyaY (106 aa).

The protein belongs to the frataxin family.

Functionally, involved in iron-sulfur (Fe-S) cluster assembly. May act as a regulator of Fe-S biogenesis. The protein is Iron-sulfur cluster assembly protein CyaY of Cronobacter sakazakii (strain ATCC BAA-894) (Enterobacter sakazakii).